A 72-amino-acid chain; its full sequence is Translation initiation factor IF-1 (72 aa).

The region spanning 1–72 is the S1-like domain; sequence MAKEGAIEVE…TRGRIVYRYK (72 aa).

It belongs to the IF-1 family. In terms of assembly, component of the 30S ribosomal translation pre-initiation complex which assembles on the 30S ribosome in the order IF-2 and IF-3, IF-1 and N-formylmethionyl-tRNA(fMet); mRNA recruitment can occur at any time during PIC assembly.

The protein resides in the cytoplasm. In terms of biological role, one of the essential components for the initiation of protein synthesis. Stabilizes the binding of IF-2 and IF-3 on the 30S subunit to which N-formylmethionyl-tRNA(fMet) subsequently binds. Helps modulate mRNA selection, yielding the 30S pre-initiation complex (PIC). Upon addition of the 50S ribosomal subunit IF-1, IF-2 and IF-3 are released leaving the mature 70S translation initiation complex. This is Translation initiation factor IF-1 from Corynebacterium efficiens (strain DSM 44549 / YS-314 / AJ 12310 / JCM 11189 / NBRC 100395).